Reading from the N-terminus, the 350-residue chain is Protein RecA (350 aa).

67-74 (GPESSGKT) serves as a coordination point for ATP.

It belongs to the RecA family.

It is found in the cytoplasm. Functionally, can catalyze the hydrolysis of ATP in the presence of single-stranded DNA, the ATP-dependent uptake of single-stranded DNA by duplex DNA, and the ATP-dependent hybridization of homologous single-stranded DNAs. It interacts with LexA causing its activation and leading to its autocatalytic cleavage. The protein is Protein RecA of Chlamydia caviae (strain ATCC VR-813 / DSM 19441 / 03DC25 / GPIC) (Chlamydophila caviae).